Consider the following 112-residue polypeptide: Probable prefoldin subunit 1 (112 aa).

The protein belongs to the prefoldin subunit beta family. In terms of assembly, heterohexamer of two PFD-alpha type and four PFD-beta type subunits.

Its function is as follows. Binds specifically to cytosolic chaperonin (c-CPN) and transfers target proteins to it. Binds to nascent polypeptide chain and promotes folding in an environment in which there are many competing pathways for nonnative proteins. The protein is Probable prefoldin subunit 1 of Schizosaccharomyces pombe (strain 972 / ATCC 24843) (Fission yeast).